The sequence spans 238 residues: Lactate utilization protein A (238 aa).

The protein belongs to the LutA/YkgE family.

In terms of biological role, is involved in L-lactate degradation and allows cells to grow with lactate as the sole carbon source. The polypeptide is Lactate utilization protein A (Bacillus pumilus (strain SAFR-032)).